The chain runs to 128 residues: 2-iminobutanoate/2-iminopropanoate deaminase (128 aa).

This sequence belongs to the RutC family.

It is found in the cytoplasm. The enzyme catalyses 2-iminobutanoate + H2O = 2-oxobutanoate + NH4(+). It carries out the reaction 2-iminopropanoate + H2O = pyruvate + NH4(+). Functionally, catalyzes the hydrolytic deamination of enamine/imine intermediates that form during the course of normal metabolism. May facilitate the release of ammonia from these potentially toxic reactive metabolites, reducing their impact on cellular components. It may act on enamine/imine intermediates formed by several types of pyridoxal-5'-phosphate-dependent dehydratases including L-threonine dehydratase. Preferentially digests Leu and Met in cooperation with L-amino acid oxidase, but digests Phe poorly. This Dermatophagoides farinae (American house dust mite) protein is 2-iminobutanoate/2-iminopropanoate deaminase.